The following is an 84-amino-acid chain: Toxin Tf2 (84 aa).

The first 20 residues, 1–20 (MKRFLLFISILMMIGTIVVG), serve as a signal peptide directing secretion. The region spanning 21–83 (KEGYAMDHEG…VWDYATNKCG (63 aa)) is the LCN-type CS-alpha/beta domain. 4 disulfides stabilise this stretch: cysteine 31-cysteine 82, cysteine 35-cysteine 58, cysteine 43-cysteine 63, and cysteine 47-cysteine 65. Position 82 is a cysteine amide (cysteine 82).

It belongs to the long (4 C-C) scorpion toxin superfamily. Sodium channel inhibitor family. Beta subfamily. Post-translationally, contains 4 disulfide bonds. Expressed by the venom gland.

Its subcellular location is the secreted. Functionally, beta toxins bind voltage-independently at site-4 of sodium channels (Nav) and shift the voltage of activation toward more negative potentials thereby affecting sodium channel activation and promoting spontaneous and repetitive firing. This toxin is active against hNav1.3/SCN3A. The protein is Toxin Tf2 of Tityus fasciolatus (Central Brazilian scorpion).